We begin with the raw amino-acid sequence, 164 residues long: MFMIEVEIFPHRYLKASTTEKFLNKIYDLKTVERVVIHGQPLPKVITYGPARGLPVNHTERKIIHVKGVPVELTVMAGRFWITLSDDSELDKLDEICKEMFPFGYNLRVGKFLKDRPTVTDYIKYGEDGVFLINEMDRRLIGMVDPRSRMANSVTVVEKEEKEE.

In terms of assembly, MCR is composed of three subunits: alpha, beta, and gamma. The function of proteins C and D is not known.

This chain is Methyl-coenzyme M reductase I operon protein D (mcrD), found in Methanocaldococcus jannaschii (strain ATCC 43067 / DSM 2661 / JAL-1 / JCM 10045 / NBRC 100440) (Methanococcus jannaschii).